The primary structure comprises 117 residues: Large ribosomal subunit protein bL20c (117 aa).

This sequence belongs to the bacterial ribosomal protein bL20 family.

The protein resides in the plastid. It is found in the chloroplast. Binds directly to 23S ribosomal RNA and is necessary for the in vitro assembly process of the 50S ribosomal subunit. It is not involved in the protein synthesizing functions of that subunit. This is Large ribosomal subunit protein bL20c from Draba nemorosa (Woodland whitlowgrass).